A 450-amino-acid chain; its full sequence is Adenylosuccinate lyase (450 aa).

N(6)-(1,2-dicarboxyethyl)-AMP contacts are provided by residues 9–10 (RY), 75–77 (HHD), and 101–102 (TS). The Proton donor/acceptor role is filled by His149. Gln223 lines the N(6)-(1,2-dicarboxyethyl)-AMP pocket. The active-site Proton donor/acceptor is the Ser273. N(6)-(1,2-dicarboxyethyl)-AMP contacts are provided by residues Ser274, 279–281 (KRN), and 318–322 (SVERV).

This sequence belongs to the lyase 1 family. Adenylosuccinate lyase subfamily. As to quaternary structure, homotetramer. Residues from neighboring subunits contribute catalytic and substrate-binding residues to each active site.

It catalyses the reaction N(6)-(1,2-dicarboxyethyl)-AMP = fumarate + AMP. The enzyme catalyses (2S)-2-[5-amino-1-(5-phospho-beta-D-ribosyl)imidazole-4-carboxamido]succinate = 5-amino-1-(5-phospho-beta-D-ribosyl)imidazole-4-carboxamide + fumarate. It functions in the pathway purine metabolism; AMP biosynthesis via de novo pathway; AMP from IMP: step 2/2. It participates in purine metabolism; IMP biosynthesis via de novo pathway; 5-amino-1-(5-phospho-D-ribosyl)imidazole-4-carboxamide from 5-amino-1-(5-phospho-D-ribosyl)imidazole-4-carboxylate: step 2/2. Catalyzes two reactions in de novo purine nucleotide biosynthesis. Catalyzes the breakdown of 5-aminoimidazole- (N-succinylocarboxamide) ribotide (SAICAR or 2-[5-amino-1-(5-phospho-beta-D-ribosyl)imidazole-4-carboxamido]succinate) to 5-aminoimidazole-4-carboxamide ribotide (AICAR or 5-amino-1-(5-phospho-beta-D-ribosyl)imidazole-4-carboxamide) and fumarate, and of adenylosuccinate (ADS or N(6)-(1,2-dicarboxyethyl)-AMP) to adenosine monophosphate (AMP) and fumarate. The sequence is that of Adenylosuccinate lyase (purB) from Pyrococcus abyssi (strain GE5 / Orsay).